A 343-amino-acid chain; its full sequence is Holliday junction branch migration complex subunit RuvB (343 aa).

The tract at residues 1–182 (MRDELLNTPT…FGISNRLDYY (182 aa)) is large ATPase domain (RuvB-L). ATP contacts are provided by residues Ile-21, Arg-22, Gly-63, Lys-66, Thr-67, Thr-68, 129–131 (EDF), Arg-172, Tyr-182, and Arg-219. Mg(2+) is bound at residue Thr-67. Residues 183-253 (SAELLQRIII…LARKTLAALE (71 aa)) form a small ATPAse domain (RuvB-S) region. The head domain (RuvB-H) stretch occupies residues 256-343 (EDGLDDMDKK…DGPLFQKGSS (88 aa)). 2 residues coordinate DNA: Arg-311 and Arg-316.

Belongs to the RuvB family. As to quaternary structure, homohexamer. Forms an RuvA(8)-RuvB(12)-Holliday junction (HJ) complex. HJ DNA is sandwiched between 2 RuvA tetramers; dsDNA enters through RuvA and exits via RuvB. An RuvB hexamer assembles on each DNA strand where it exits the tetramer. Each RuvB hexamer is contacted by two RuvA subunits (via domain III) on 2 adjacent RuvB subunits; this complex drives branch migration. In the full resolvosome a probable DNA-RuvA(4)-RuvB(12)-RuvC(2) complex forms which resolves the HJ.

Its subcellular location is the cytoplasm. The catalysed reaction is ATP + H2O = ADP + phosphate + H(+). The RuvA-RuvB-RuvC complex processes Holliday junction (HJ) DNA during genetic recombination and DNA repair, while the RuvA-RuvB complex plays an important role in the rescue of blocked DNA replication forks via replication fork reversal (RFR). RuvA specifically binds to HJ cruciform DNA, conferring on it an open structure. The RuvB hexamer acts as an ATP-dependent pump, pulling dsDNA into and through the RuvAB complex. RuvB forms 2 homohexamers on either side of HJ DNA bound by 1 or 2 RuvA tetramers; 4 subunits per hexamer contact DNA at a time. Coordinated motions by a converter formed by DNA-disengaged RuvB subunits stimulates ATP hydrolysis and nucleotide exchange. Immobilization of the converter enables RuvB to convert the ATP-contained energy into a lever motion, pulling 2 nucleotides of DNA out of the RuvA tetramer per ATP hydrolyzed, thus driving DNA branch migration. The RuvB motors rotate together with the DNA substrate, which together with the progressing nucleotide cycle form the mechanistic basis for DNA recombination by continuous HJ branch migration. Branch migration allows RuvC to scan DNA until it finds its consensus sequence, where it cleaves and resolves cruciform DNA. In Prosthecochloris aestuarii (strain DSM 271 / SK 413), this protein is Holliday junction branch migration complex subunit RuvB.